Reading from the N-terminus, the 136-residue chain is Small ribosomal subunit protein uS19 (136 aa).

This sequence belongs to the universal ribosomal protein uS19 family.

Functionally, protein S19 forms a complex with S13 that binds strongly to the 16S ribosomal RNA. This is Small ribosomal subunit protein uS19 (rps19) from Methanothermobacter thermautotrophicus (strain ATCC 29096 / DSM 1053 / JCM 10044 / NBRC 100330 / Delta H) (Methanobacterium thermoautotrophicum).